A 707-amino-acid chain; its full sequence is Zinc finger CCHC domain-containing protein 8 (707 aa).

Alanine 2 is subject to N-acetylalanine. Residues 16–44 (FDHPEESIPKPVHTRFKDDDGDEEDENGV) form a disordered region. Acidic residues predominate over residues 34–43 (DDGDEEDENG). The stretch at 45–80 (GDAELRERLRQCEETIEQLRAENQELKRKLNILTRP) forms a coiled coil. Residues 227-244 (PHCFNCGSEEHQMKDCPM) form a CCHC-type zinc finger. RBM7 binding stretches follow at residues 286-299 (FKPG…QDAL) and 309-324 (FIYR…GWLK). Threonine 342 carries the post-translational modification Phosphothreonine. Disordered regions lie at residues 409–518 (APGV…LTLE), 531–607 (LEQA…TSLC), and 641–660 (QKLF…HSPI). Lysine 413 participates in a covalent cross-link: Glycyl lysine isopeptide (Lys-Gly) (interchain with G-Cter in SUMO2). Over residues 456 to 465 (SQSSESFQFQ) the composition is skewed to low complexity. Residues 466–496 (PPLPPDTPPLPRGTPPPVFTPPLPKGTPPLT) are compositionally biased toward pro residues. Phosphothreonine occurs at positions 472, 479, and 485. A Phosphothreonine; by GSK3 modification is found at threonine 492. A coiled-coil region spans residues 516 to 539 (TLEELEEQQRRIWAALEQAESVNS). Residues 549–559 (LTGNSVASSPC) show a composition bias toward polar residues. Residue threonine 577 is modified to Phosphothreonine. Phosphoserine is present on serine 598. The span at 598–607 (SPDSEVTSLC) shows a compositional bias: polar residues. The residue at position 648 (threonine 648) is a Phosphothreonine. Serine 649, serine 658, and serine 695 each carry phosphoserine. The MTREX binding stretch occupies residues 659 to 707 (PIPDMSKFATGITPFEFENMAESTGMYLRIRSLLKNSPRNQQKNKKASE).

It belongs to the ZCCHC8 family. As to quaternary structure, component of a nuclear TRAMP-like complex, an ATP-dependent exosome regulatory complex consisting of a helicase (MTREX), an oligadenylate polymerase (TENT4B or TENT4A), and a substrate specific RNA-binding factor (ZCCHC7 or ZCCHC8). Several TRAMP-like complexes exist with specific compositions and are associated with nuclear, or nucleolar RNA exosomes. Identified in the spliceosome C complex. Component of the nuclear exosome targeting (NEXT) complex composed of MTREX, ZCCHC8, and RBM7 that directs a subset of non-coding short-lived RNAs for exosomal degradation. Interacts with proteins involved in RNA processing and degradation such as MTREX and RBM7; interaction with MTREX enhances MTREX RNA helicase activity and bridges between RBM7 and MTREX. Interacts with TERC, the telomerase RNA component. Post-translationally, phosphorylation at Thr-492 by GSK3 is triggered in cells entering mitosis; this phosphorylation is greatly enhanced by nocodazole treatment, but reduced by lithium.

The protein resides in the nucleus. It localises to the nucleoplasm. Scaffolding subunit of the trimeric nuclear exosome targeting (NEXT) complex that is involved in the surveillance and turnover of aberrant transcripts and non-coding RNAs. NEXT functions as an RNA exosome cofactor that directs a subset of non-coding short-lived RNAs for exosomal degradation. May be involved in pre-mRNA splicing. It is required for 3'-end maturation of telomerase RNA component (TERC), TERC 3'-end targeting to the nuclear RNA exosome, and for telomerase function. This chain is Zinc finger CCHC domain-containing protein 8 (ZCCHC8), found in Homo sapiens (Human).